Here is a 396-residue protein sequence, read N- to C-terminus: Putative nickel insertion protein (396 aa).

Belongs to the LarC family.

This is Putative nickel insertion protein from Methanococcoides burtonii (strain DSM 6242 / NBRC 107633 / OCM 468 / ACE-M).